The following is a 566-amino-acid chain: 4-hydroxy-7-methoxy-3-oxo-3,4-dihydro-2H-1,4-benzoxazin-2-yl glucoside beta-D-glucosidase 1, chloroplastic (566 aa).

The transit peptide at 1–54 directs the protein to the chloroplast; the sequence is MAPLLAAAMNHAAAHPGLRSHLVGPNNESFSRHHLPSSSPQSSKRRCNLSFTTR. The disordered stretch occupies residues 17-47; sequence GLRSHLVGPNNESFSRHHLPSSSPQSSKRRC. A beta-D-glucoside contacts are provided by residues Gln-92, His-196, and 244–245; that span reads NE. The active-site Proton donor is Glu-245. Cys-264 and Cys-270 are disulfide-bonded. Positions 325-361 are dimerization; it reads SFLDKQAEERSWDINLGWFLEPVVRGDYPFSMRSLAR. Tyr-387 is an a beta-D-glucoside binding site. Dimerization stretches follow at residues 394 to 405 and 450 to 453; these read NIDISPNYSPVL and KYGN. Residues Glu-460, Trp-511, 518–519, and Tyr-527 contribute to the a beta-D-glucoside site; that span reads EW. Glu-460 functions as the Nucleophile in the catalytic mechanism.

This sequence belongs to the glycosyl hydrolase 1 family. Homo- and heterodimer. As to expression, expressed in all seedling parts. Most abundant in the coleoptile.

It is found in the plastid. It localises to the chloroplast. The catalysed reaction is Hydrolysis of terminal, non-reducing beta-D-glucosyl residues with release of beta-D-glucose.. It catalyses the reaction DIMBOA beta-D-glucoside + H2O = DIMBOA + D-glucose. It carries out the reaction DIBOA beta-D-glucoside + H2O = DIBOA + D-glucose. With respect to regulation, reversibly inhibited by micromolar concentrations of Hg(2+) or Ag(+), but irreversibly inhibited by alkylation in presence of urea. Competitive inhibition by p-nitrophenyl beta-D-thioglucoside (pNPTGlc), glucotetrazole, and para-hydroxy-S-mandelonitrile beta-glucoside (dhurrin). Functionally, is implicated in many functions such as ABA metabolism, hydrolysis of conjugated gibberellins, conversion of storage forms of cytokinins to active forms. Also acts in defense of young plant parts against pests via the production of hydroxamic acids from hydroxamic acid glucosides. Enzymatic activity is highly correlated with plant growth. The preferred substrate is DIMBOA-beta-D-glucoside. Hydrolyzes the chromogenic substrate 6-bromo-2-naphthyl-beta-D-glucoside (6BNGlc) and various artificial aryl beta-glucosides. No activity with cellobiose, arbutin, gentiobiose, linamarin or dhurrin as substrates. In Zea mays (Maize), this protein is 4-hydroxy-7-methoxy-3-oxo-3,4-dihydro-2H-1,4-benzoxazin-2-yl glucoside beta-D-glucosidase 1, chloroplastic (GLU1).